A 294-amino-acid chain; its full sequence is uncharacterized protein (294 aa).

2 disordered regions span residues 25–59 and 77–141; these read VQVY…RVRR and LKDD…FEAP. Residues 86 to 139 show a composition bias toward acidic residues; sequence YEELEDDDDDESIEEESDSEFEGESSSDEEESSYDSDSDYDSETEPEDSDDDFE. Positions 201–234 form a coiled coil; the sequence is IKFYKRNTTFTEEELAEIEEDLLAEVKARYNNMK. Residues 242–259 show a composition bias toward basic and acidic residues; sequence TIETTEDDKKAGEVNKYD. The tract at residues 242 to 294 is disordered; that stretch reads TIETTEDDKKAGEVNKYDIDDDFIEKTESDEEEEITEDDSSEQETVVVEPVDE. A compositionally biased stretch (acidic residues) spans 260–283; sequence IDDDFIEKTESDEEEEITEDDSSE.

This is an uncharacterized protein from Magallana gigas (Pacific oyster).